The following is a 161-amino-acid chain: MGAKDYIGSLFLTELIKGLALTGRHLFARKITVQFPEEKTPASPRFRGLHALRRYPNGEERCIACKLCEAVCPALAITIESEQRDDGSRRTKRYDIDLTKCIFCGFCEEACPVDAVVETRVMEYHGEKRGDLYYTKQMLLAVGDRYEAQIAADREADAKYR.

2 consecutive 4Fe-4S ferredoxin-type domains span residues 52 to 82 (LRRY…IESE) and 92 to 121 (KRYD…ETRV). Residues Cys-62, Cys-65, Cys-68, Cys-72, Cys-101, Cys-104, Cys-107, and Cys-111 each coordinate [4Fe-4S] cluster.

The protein belongs to the complex I 23 kDa subunit family. In terms of assembly, NDH-1 is composed of 14 different subunits. Subunits NuoA, H, J, K, L, M, N constitute the membrane sector of the complex. [4Fe-4S] cluster serves as cofactor.

Its subcellular location is the cell inner membrane. The catalysed reaction is a quinone + NADH + 5 H(+)(in) = a quinol + NAD(+) + 4 H(+)(out). In terms of biological role, NDH-1 shuttles electrons from NADH, via FMN and iron-sulfur (Fe-S) centers, to quinones in the respiratory chain. The immediate electron acceptor for the enzyme in this species is believed to be ubiquinone. Couples the redox reaction to proton translocation (for every two electrons transferred, four hydrogen ions are translocated across the cytoplasmic membrane), and thus conserves the redox energy in a proton gradient. In Aromatoleum aromaticum (strain DSM 19018 / LMG 30748 / EbN1) (Azoarcus sp. (strain EbN1)), this protein is NADH-quinone oxidoreductase subunit I.